A 336-amino-acid chain; its full sequence is Fructose-1,6-bisphosphatase class 1 (336 aa).

Residues Glu90, Asp112, Leu114, and Asp115 each contribute to the Mg(2+) site. Substrate is bound by residues 115-118, Asn211, and Lys277; that span reads DGSS. Mg(2+) is bound at residue Glu283.

Belongs to the FBPase class 1 family. In terms of assembly, homotetramer. The cofactor is Mg(2+).

The protein localises to the cytoplasm. The catalysed reaction is beta-D-fructose 1,6-bisphosphate + H2O = beta-D-fructose 6-phosphate + phosphate. The protein operates within carbohydrate biosynthesis; gluconeogenesis. The sequence is that of Fructose-1,6-bisphosphatase class 1 from Pseudomonas savastanoi pv. phaseolicola (strain 1448A / Race 6) (Pseudomonas syringae pv. phaseolicola (strain 1448A / Race 6)).